We begin with the raw amino-acid sequence, 44 residues long: Photosystem I reaction center subunit IX (44 aa).

A helical membrane pass occupies residues 7–27; sequence YLSVAPVLTTLWFGSLAGLLI.

It belongs to the PsaJ family.

It localises to the plastid. The protein resides in the chloroplast thylakoid membrane. Functionally, may help in the organization of the PsaE and PsaF subunits. This Nymphaea alba (White water-lily) protein is Photosystem I reaction center subunit IX.